Here is a 753-residue protein sequence, read N- to C-terminus: Nibrin (753 aa).

Residues 22–81 (YVVGRKNCAFLIQDDQSISRSHAVLTVSRPETTHSQSVSVPVLTIKDTSKYGTFVNGSKL) enclose the FHA domain. 2 BRCT domains span residues 101–191 (SKFR…PTPE) and 221–311 (GKTF…LAVI). Phosphoserine is present on serine 274. A Phosphoserine; by ATM modification is found at serine 343. Residues 442 to 606 (RECTPRQQSN…NTKQREENEM (165 aa)) are disordered. The segment covering 446-455 (PRQQSNSITN) has biased composition (polar residues). Residues 461–467 (RKRERAE) carry the Nuclear localization signal motif. Over residues 490–500 (CTESSASSAWN) the composition is skewed to polar residues. Residues 517 to 528 (ESGELASDKTDI) are compositionally biased toward basic and acidic residues. Residues 568–577 (QTANGDQEAQ) are compositionally biased toward polar residues. Basic and acidic residues predominate over residues 585–606 (CLETKGSRTEEGNTKQREENEM). The FxF/Y motif motif lies at 739-748 (ADDLFRYDPN).

Belongs to the Nibrin family. As to quaternary structure, component of the MRN complex composed of two heterodimers RAD50 and mre11 associated with a single NBN.

It is found in the nucleus. Its subcellular location is the chromosome. The protein localises to the PML body. It localises to the telomere. In terms of biological role, component of the MRN complex, which plays a central role in double-strand break (DSB) repair, DNA recombination, maintenance of telomere integrity and meiosis. The MRN complex is involved in the repair of DNA double-strand breaks (DSBs) via homologous recombination (HR), an error-free mechanism which primarily occurs during S and G2 phases. The complex (1) mediates the end resection of damaged DNA, which generates proper single-stranded DNA, a key initial steps in HR, and is (2) required for the recruitment of other repair factors and efficient activation of ATM and ATR upon DNA damage. The MRN complex possesses single-strand endonuclease activity and double-strand-specific 3'-5' exonuclease activity, which are provided by MRE11, to initiate end resection, which is required for single-strand invasion and recombination. Within the MRN complex, NBN acts as a protein-protein adapter, which specifically recognizes and binds phosphorylated proteins, promoting their recruitment to DNA damage sites. Recruits MRE11 and RAD50 components of the MRN complex to DSBs in response to DNA damage. Promotes the recruitment of PI3/PI4-kinase family members ATM, ATR, and probably DNA-PKcs to the DNA damage sites, activating their functions. Mediates the recruitment of phosphorylated RBBP8/CtIP to DSBs, leading to cooperation between the MRN complex and RBBP8/CtIP to initiate end resection. The MRN complex and rbbp8/CtIP are also required for chromosome alignment during metaphase. This is Nibrin (NBN) from Gallus gallus (Chicken).